Reading from the N-terminus, the 426-residue chain is Probable auxin efflux carrier component 9 (426 aa).

Residues 1–6 (MITGSE) are Extracellular-facing. Residues 7–27 (VYQVVEAMAPLYTAAALGYGS) form a helical membrane-spanning segment. Residues 28-38 (VRWLKAFSNEQ) lie on the Cytoplasmic side of the membrane. A helical membrane pass occupies residues 39–59 (CAGINHFVALYAVPVLIFDMV). V51 is a binding site for (indol-3-yl)acetate. The Extracellular segment spans residues 60-70 (STNNVYKMNGR). Residues 71 to 91 (LIAADTLQKAVLLLGLMAWAL) traverse the membrane as a helical segment. The Cytoplasmic segment spans residues 92–114 (WERSRARGAGAKAKAAVSSPLQW). Residues 115-135 (VITCFSVASLPNTIIMGVPLL) form a helical membrane-spanning segment. (indol-3-yl)acetate contacts are provided by N126 and I128. Over 136–145 (NGMYGPVSKD) the chain is Extracellular. Residues 146 to 166 (LMKQIVVMQFCIWYNVIIFLY) form a helical membrane-spanning segment. Y159 contributes to the (indol-3-yl)acetate binding site. Residues 167–286 (EYMAARRSAS…LLQIPNTYAS (120 aa)) lie on the Cytoplasmic side of the membrane. The tract at residues 232–258 (RDGVSGETTAAAKEVSSGEVAPVEEEE) is disordered. A helical membrane pass occupies residues 287–307 (FLGLIWSLIAFKCGFSMPKIV). Residues 308–310 (EDS) are Extracellular-facing. The helical transmembrane segment at 311–331 (LFTIRTTAVGLSMFSSGTFIA) threads the bilayer. Residues 332-347 (RQSRFVPCGYKIASFS) are Cytoplasmic-facing. A helical transmembrane segment spans residues 348 to 368 (MVIKFLIGPVVMLFASLVIGM). Over 369–371 (HGT) the chain is Extracellular. A helical transmembrane segment spans residues 372–392 (LLHIAVVQAALPLAVTSFVYA). V386 lines the (indol-3-yl)acetate pocket. Topologically, residues 393–405 (EEYKVHADIMSTG) are cytoplasmic. Residues 406 to 426 (VILGIFISLPVTIVYYILLGL) form a helical membrane-spanning segment.

This sequence belongs to the auxin efflux carrier (TC 2.A.69.1) family. In terms of assembly, homodimer. Expressed in roots, leaves and shoot apex. Expressed in roots, stem bases, stems, leaves and young panicles.

It is found in the membrane. Its function is as follows. May act as a component of the auxin efflux carrier. The chain is Probable auxin efflux carrier component 9 from Oryza sativa subsp. japonica (Rice).